A 90-amino-acid polypeptide reads, in one-letter code: Small ribosomal subunit protein bS20 (90 aa).

The tract at residues 1 to 28 is disordered; it reads MPNTSSASKRLRQNEKRRLLNRATRSNM.

The protein belongs to the bacterial ribosomal protein bS20 family.

Functionally, binds directly to 16S ribosomal RNA. In Rhodopirellula baltica (strain DSM 10527 / NCIMB 13988 / SH1), this protein is Small ribosomal subunit protein bS20.